Here is a 341-residue protein sequence, read N- to C-terminus: Heterogeneous nuclear ribonucleoproteins A2/B1 (341 aa).

2 consecutive RRM domains span residues 9-92 (RKLF…ESGK) and 100-179 (KKLF…LSRQ). K10 is covalently cross-linked (Glycyl lysine isopeptide (Lys-Gly) (interchain with G-Cter in SUMO2)). S17 bears the Phosphoserine mark. R26 carries the omega-N-methylarginine modification. Residue S73 is modified to Phosphoserine. Position 92 is an N6,N6-dimethyllysine; alternate (K92). K92 is covalently cross-linked (Glycyl lysine isopeptide (Lys-Gly) (interchain with G-Cter in SUMO2); alternate). Glycyl lysine isopeptide (Lys-Gly) (interchain with G-Cter in SUMO2) cross-links involve residues K100, K108, and K125. The residue at position 128 (T128) is a Phosphothreonine. S137 is subject to Phosphoserine. K140 participates in a covalent cross-link: Glycyl lysine isopeptide (Lys-Gly) (interchain with G-Cter in SUMO2). Phosphothreonine is present on T147. Glycyl lysine isopeptide (Lys-Gly) (interchain with G-Cter in SUMO2); alternate cross-links involve residues K156 and K161. K156 and K161 each carry N6-acetyllysine; alternate. Position 164 is a phosphothreonine (T164). Residue K174 forms a Glycyl lysine isopeptide (Lys-Gly) (interchain with G-Cter in SUMO2) linkage. Phosphoserine is present on residues S177 and S189. Residues 181–341 (MQEVQSSRSG…SGGYGGRSRY (161 aa)) form a disordered region. Over residues 190-211 (GRGGNFGFGDSRGGGGNFGPGP) the composition is skewed to gly residues. Residue R191 is modified to Asymmetric dimethylarginine; alternate. Dimethylated arginine; alternate is present on R191. R191 is subject to Omega-N-methylarginine; alternate. S200 carries the phosphoserine modification. At R201 the chain carries Asymmetric dimethylarginine; alternate. R201 carries the post-translational modification Dimethylated arginine; alternate. R201 is subject to Omega-N-methylarginine; alternate. A Phosphoserine modification is found at S213. At R216 the chain carries Omega-N-methylarginine. Phosphoserine occurs at positions 219 and 224. R226 carries the omega-N-methylarginine modification. S247 bears the Phosphoserine mark. At R254 the chain carries Asymmetric dimethylarginine; alternate. An Omega-N-methylarginine; alternate modification is found at R254. Residues 296 to 335 (QQPSNYGPMKSGNFGGSRNMGGPYGGGNYGPGGSGGSGGY) are nuclear targeting sequence. Over residues 308-341 (NFGGSRNMGGPYGGGNYGPGGSGGSGGYGGRSRY) the composition is skewed to gly residues. Position 312 is a phosphoserine (S312). Position 313 is an omega-N-methylarginine (R313). Y319 is modified (phosphotyrosine). A phosphoserine mark is found at S329 and S332. Y335 is modified (phosphotyrosine). R338 is modified (omega-N-methylarginine).

As to quaternary structure, identified in the spliceosome C complex. Identified in a IGF2BP1-dependent mRNP granule complex containing untranslated mRNAs. Interacts with IGF2BP1. Interacts with C9orf72. Interacts with DGCR8. Interacts with TARDBP. Interacts with CKAP5. Interacts with PPIA/CYPA. Interacts (via C-terminus) with FAM76B; the interaction results in retention of HNRNPA2B1 in the nucleus and inhibition of the NF-kappa-B-mediated inflammatory pathway. Interacts with NF-kappa-B inhibitors NFKBIA and NFKBIE; the interaction may be mediated by the RRM2 domain of HNRNPA2B1, and HNRNPA2B1 may interact simultaneously with FAM76B and either NFKBIA or NFKBIE to form a complex. In terms of processing, sumoylated in exosomes, promoting miRNAs-binding. Post-translationally, asymmetric dimethylation at Arg-254 constitutes the major methylation site. According to a report, methylation affects subcellular location and promotes nuclear localization. According to another report, methylation at Arg-254 does not influence nucleocytoplasmic shuttling.

The protein resides in the nucleus. Its subcellular location is the nucleoplasm. It localises to the cytoplasmic granule. It is found in the secreted. The protein localises to the extracellular exosome. In terms of biological role, heterogeneous nuclear ribonucleoprotein (hnRNP) that associates with nascent pre-mRNAs, packaging them into hnRNP particles. The hnRNP particle arrangement on nascent hnRNA is non-random and sequence-dependent and serves to condense and stabilize the transcripts and minimize tangling and knotting. Packaging plays a role in various processes such as transcription, pre-mRNA processing, RNA nuclear export, subcellular location, mRNA translation and stability of mature mRNAs. Forms hnRNP particles with at least 20 other different hnRNP and heterogeneous nuclear RNA in the nucleus. Involved in transport of specific mRNAs to the cytoplasm in oligodendrocytes and neurons: acts by specifically recognizing and binding the A2RE (21 nucleotide hnRNP A2 response element) or the A2RE11 (derivative 11 nucleotide oligonucleotide) sequence motifs present on some mRNAs, and promotes their transport to the cytoplasm. Specifically binds single-stranded telomeric DNA sequences, protecting telomeric DNA repeat against endonuclease digestion. Also binds other RNA molecules, such as primary miRNA (pri-miRNAs): acts as a nuclear 'reader' of the N6-methyladenosine (m6A) mark by specifically recognizing and binding a subset of nuclear m6A-containing pri-miRNAs. Binding to m6A-containing pri-miRNAs promotes pri-miRNA processing by enhancing binding of DGCR8 to pri-miRNA transcripts. Involved in miRNA sorting into exosomes following sumoylation, possibly by binding (m6A)-containing pre-miRNAs. Acts as a regulator of efficiency of mRNA splicing, possibly by binding to m6A-containing pre-mRNAs. Plays a role in the splicing of pyruvate kinase PKM by binding repressively to sequences flanking PKM exon 9, inhibiting exon 9 inclusion and resulting in exon 10 inclusion and production of the PKM M2 isoform. In Bos taurus (Bovine), this protein is Heterogeneous nuclear ribonucleoproteins A2/B1 (HNRNPA2B1).